The following is a 589-amino-acid chain: ATP-dependent lipid A-core flippase (589 aa).

The next 5 helical transmembrane spans lie at 29-49 (LLLV…TGFL), 70-90 (WLPV…YITD), 157-177 (VIGA…TILV), 261-281 (MIGA…ALAG), and 283-303 (LTAG…PGLK). Residues 32–314 (VAALIAALIE…LTNVQNMVQR (283 aa)) form the ABC transmembrane type-1 domain. The ABC transporter domain occupies 346–582 (IEFRDVTARY…GGLYSHLHGM (237 aa)). An ATP-binding site is contributed by 380–387 (GRSGSGKS).

This sequence belongs to the ABC transporter superfamily. Lipid exporter (TC 3.A.1.106) family. In terms of assembly, homodimer.

Its subcellular location is the cell inner membrane. The catalysed reaction is ATP + H2O + lipid A-core oligosaccharideSide 1 = ADP + phosphate + lipid A-core oligosaccharideSide 2.. Its function is as follows. Involved in lipopolysaccharide (LPS) biosynthesis. Translocates lipid A-core from the inner to the outer leaflet of the inner membrane. Transmembrane domains (TMD) form a pore in the inner membrane and the ATP-binding domain (NBD) is responsible for energy generation. In Xanthomonas oryzae pv. oryzae (strain MAFF 311018), this protein is ATP-dependent lipid A-core flippase.